Reading from the N-terminus, the 105-residue chain is UPF0235 protein CT1832 (105 aa).

It belongs to the UPF0235 family.

This is UPF0235 protein CT1832 from Chlorobaculum tepidum (strain ATCC 49652 / DSM 12025 / NBRC 103806 / TLS) (Chlorobium tepidum).